Consider the following 214-residue polypeptide: Urease accessory protein UreF (214 aa).

Residues 70–95 are disordered; it reads AAAGEAGDAETDARTPSPAARAASRA. A compositionally biased stretch (low complexity) spans 83-95; the sequence is RTPSPAARAASRA.

The protein belongs to the UreF family. In terms of assembly, ureD, UreF and UreG form a complex that acts as a GTP-hydrolysis-dependent molecular chaperone, activating the urease apoprotein by helping to assemble the nickel containing metallocenter of UreC. The UreE protein probably delivers the nickel.

It localises to the cytoplasm. Its function is as follows. Required for maturation of urease via the functional incorporation of the urease nickel metallocenter. The sequence is that of Urease accessory protein UreF from Mycolicibacterium vanbaalenii (strain DSM 7251 / JCM 13017 / BCRC 16820 / KCTC 9966 / NRRL B-24157 / PYR-1) (Mycobacterium vanbaalenii).